A 304-amino-acid polypeptide reads, in one-letter code: Glycine--tRNA ligase alpha subunit (304 aa).

This sequence belongs to the class-II aminoacyl-tRNA synthetase family. Tetramer of two alpha and two beta subunits.

Its subcellular location is the cytoplasm. It carries out the reaction tRNA(Gly) + glycine + ATP = glycyl-tRNA(Gly) + AMP + diphosphate. This Afipia carboxidovorans (strain ATCC 49405 / DSM 1227 / KCTC 32145 / OM5) (Oligotropha carboxidovorans) protein is Glycine--tRNA ligase alpha subunit.